We begin with the raw amino-acid sequence, 465 residues long: Kinesin-like protein KIN-1 (465 aa).

Positions 3 to 334 constitute a Kinesin motor domain; it reads NVTVCARFRP…LRFGMRAKHI (332 aa). 87–94 contributes to the ATP binding site; sequence GQTGAGKT. Positions 338–358 are disordered; the sequence is PRASEVKSAKAQEEPSSVTKD. Basic and acidic residues predominate over residues 341 to 358; sequence SEVKSAKAQEEPSSVTKD. Residues 402–444 are a coiled coil; it reads VYEDIVSKTIQSLQQAVDELQQKVKKLEAENIGIQEQALRNHE.

Belongs to the TRAFAC class myosin-kinesin ATPase superfamily. Kinesin family. KIN-1 subfamily. As to quaternary structure, homodimer. Interacts with WIP1 and WIP2. As to expression, specifically expressed in ovules and anthers.

Kinesin-like motor protein that promotes synapsis and is required for proper crossover distribution in meiosis. Plays a role in the nuclear division cycles during megagametogenesis. The sequence is that of Kinesin-like protein KIN-1 from Arabidopsis thaliana (Mouse-ear cress).